Consider the following 355-residue polypeptide: Phosphate acyltransferase (355 aa).

This sequence belongs to the PlsX family. As to quaternary structure, homodimer. Probably interacts with PlsY.

It localises to the cytoplasm. The enzyme catalyses a fatty acyl-[ACP] + phosphate = an acyl phosphate + holo-[ACP]. It functions in the pathway lipid metabolism; phospholipid metabolism. Catalyzes the reversible formation of acyl-phosphate (acyl-PO(4)) from acyl-[acyl-carrier-protein] (acyl-ACP). This enzyme utilizes acyl-ACP as fatty acyl donor, but not acyl-CoA. In Azorhizobium caulinodans (strain ATCC 43989 / DSM 5975 / JCM 20966 / LMG 6465 / NBRC 14845 / NCIMB 13405 / ORS 571), this protein is Phosphate acyltransferase.